Here is a 195-residue protein sequence, read N- to C-terminus: Dephospho-CoA kinase (195 aa).

The DPCK domain maps to 3–195 (IIGLTGSIAM…FSIIENLLKN (193 aa)). 11–16 (AMGKST) is a binding site for ATP.

It belongs to the CoaE family.

The protein localises to the cytoplasm. It carries out the reaction 3'-dephospho-CoA + ATP = ADP + CoA + H(+). Its pathway is cofactor biosynthesis; coenzyme A biosynthesis; CoA from (R)-pantothenate: step 5/5. Catalyzes the phosphorylation of the 3'-hydroxyl group of dephosphocoenzyme A to form coenzyme A. The chain is Dephospho-CoA kinase from Bartonella quintana (strain Toulouse) (Rochalimaea quintana).